A 41-amino-acid chain; its full sequence is Peptide Hact-SCRiP1 (41 aa).

Intrachain disulfides connect cysteine 5–cysteine 37, cysteine 12–cysteine 31, cysteine 19–cysteine 38, and cysteine 26–cysteine 39.

In terms of tissue distribution, expressed in tentacles.

It localises to the nematocyst. The protein localises to the secreted. Functionally, peptide with unknown function. Does not exhibit any effect on human ion channel TRPV1 in a Xenopus laevis oocytes assay. The protein is Peptide Hact-SCRiP1 of Heliofungia actiniformis (Mushroom coral).